The primary structure comprises 331 residues: 6-phosphogluconolactonase (331 aa).

Belongs to the cycloisomerase 2 family.

The enzyme catalyses 6-phospho-D-glucono-1,5-lactone + H2O = 6-phospho-D-gluconate + H(+). It functions in the pathway carbohydrate degradation; pentose phosphate pathway; D-ribulose 5-phosphate from D-glucose 6-phosphate (oxidative stage): step 2/3. Functionally, catalyzes the hydrolysis of 6-phosphogluconolactone to 6-phosphogluconate. This Salmonella gallinarum (strain 287/91 / NCTC 13346) protein is 6-phosphogluconolactonase.